The primary structure comprises 545 residues: MTLLTQSSTWQALSAHSKNVPHMRELFATDAARFNKMSLSACGLLLDYSKNRATAETLDLLFALASNSQLEAKIKAMFAGEIINTTEKRAVLHTALRSTAEQSIIAEGQDIVPEVQQTLNKMQGFVSSVTSGQWKGYTSKAITDIVSIGIGGSFLGPKIVSQALRPYWNPELKCHFVANVDGTSISEKLKLLDPETTLFIMSSKSFGTQETLTNTLTAREWFLAKGGLQSDVAKHFVAVTSNVAKATDFGIDADNIFPMWDWVGGRYSLWSAIGLPIALLIGMDNFRALLSGAHQMDEHFANAPLTENMPVIMGLLSLWYGNFFNAQSHVVLTYDHYLRGLPAYFQQLDMESNGKSVTLNGTDVDYSTGPVIWGGEGTNGQHAYHQLLHQGTALIPADFIMPLQSHNPIGEHHDQLASNCFGQTQALMQGRTFDEALAELANSALSATEKQLIAKHKVMPGNKPSNTLLMDKLTPSTLGALIALYEHRTFVQGAIWDINSFDQWGVELGKDLGNDVLARIGASQDCDALDASSNALINLYRQGKI.

E351 acts as the Proton donor in catalysis. Active-site residues include H382 and K510.

This sequence belongs to the GPI family.

It localises to the cytoplasm. It catalyses the reaction alpha-D-glucose 6-phosphate = beta-D-fructose 6-phosphate. The protein operates within carbohydrate biosynthesis; gluconeogenesis. Its pathway is carbohydrate degradation; glycolysis; D-glyceraldehyde 3-phosphate and glycerone phosphate from D-glucose: step 2/4. Catalyzes the reversible isomerization of glucose-6-phosphate to fructose-6-phosphate. The protein is Glucose-6-phosphate isomerase of Shewanella baltica (strain OS155 / ATCC BAA-1091).